The chain runs to 827 residues: Protein SEY1 (827 aa).

The interval 1-26 is disordered; that stretch reads MSQSSPSNAETDEDLSTTSSSSSFVP. The Cytoplasmic segment spans residues 1 to 719; it reads MSQSSPSNAE…KRSIVQHVTQ (719 aa). Residues 63–291 enclose the GB1/RHD3-type G domain; it reads GNNYHIISVF…VKKDLFRPNY (229 aa). 73-80 contributes to the GTP binding site; the sequence is GSQSTGKS. 2 coiled-coil regions span residues 389-409 and 472-492; these read KSVY…KFRE and VSNL…VELK. Residues 720-740 form a helical membrane-spanning segment; sequence IPYYIYLVIMVLGWNEFMAIV. The Lumenal segment spans residues 741–743; sequence RNP. A helical membrane pass occupies residues 744–764; the sequence is LFFSLVLVFGAGLYILYSMNL. At 765 to 827 the chain is on the cytoplasmic side; sequence LKPAMVVVQR…VVETIEMQDL (63 aa). A coiled-coil region spans residues 803–823; sequence QKISASNREKVEEEKVVETIE.

It belongs to the TRAFAC class dynamin-like GTPase superfamily. GB1/RHD3 GTPase family. RHD3 subfamily.

The protein localises to the endoplasmic reticulum membrane. Cooperates with the reticulon proteins and tubule-shaping DP1 family proteins to generate and maintain the structure of the tubular endoplasmic reticulum network. Has GTPase activity, which is required for its function in ER organization. In Scheffersomyces stipitis (strain ATCC 58785 / CBS 6054 / NBRC 10063 / NRRL Y-11545) (Yeast), this protein is Protein SEY1.